The sequence spans 190 residues: Dynein axonemal light chain 1 (190 aa).

Residue alanine 2 is modified to N-acetylalanine. LRR repeat units follow at residues 49-70 (NCEK…NGLK), 71-92 (NLRI…EAVG), 94-115 (TLEE…HVMK), and 116-137 (KLKI…LKLA). At serine 56 the chain carries Phosphoserine. Positions 150 to 190 (NPLEEKHSAEGNWIDEATKRVPKLKKLDGTPVIKEDEEEES) constitute an LRRCT domain.

It belongs to the dynein light chain LC1-type family. In terms of assembly, interacts with ZMYND10 (via C-terminus). Interacts with DNAH5, a outer arm dynein heavy chain. Interacts with tubulin located within the A-tubule of the outer doublets in a ATP-independent manner. As to expression, expressed in the respiratory epithelium of the upper airways and the ependymal cells lining the brain ventricles.

The protein localises to the cytoplasm. Its subcellular location is the cytoskeleton. It is found in the cilium axoneme. Part of the multisubunit axonemal ATPase complexes that generate the force for cilia motility and govern beat frequency. Component of the outer arm dynein (ODA). May be involved in a mechanosensory feedback mechanism controlling ODA activity based on external conformational cues by tethering the outer arm dynein heavy chain (DNAH5) to the microtubule within the axoneme. Important for ciliary function in the airways and for the function of the cilia that produce the nodal flow essential for the determination of the left-right asymmetry. The polypeptide is Dynein axonemal light chain 1 (Dnal1) (Mus musculus (Mouse)).